The sequence spans 167 residues: Ubiquitin-conjugating enzyme E2 14 (167 aa).

Alanine 2 carries the N-acetylalanine modification. One can recognise a UBC core domain in the interval 5–165; it reads QASLLLQKQL…VSRCVRRSQE (161 aa). The active-site Glycyl thioester intermediate is cysteine 90.

It belongs to the ubiquitin-conjugating enzyme family.

The catalysed reaction is S-ubiquitinyl-[E1 ubiquitin-activating enzyme]-L-cysteine + [E2 ubiquitin-conjugating enzyme]-L-cysteine = [E1 ubiquitin-activating enzyme]-L-cysteine + S-ubiquitinyl-[E2 ubiquitin-conjugating enzyme]-L-cysteine.. The protein operates within protein modification; protein ubiquitination. Accepts the ubiquitin from the E1 complex and catalyzes its covalent attachment to other proteins. Involved in the formation of multiubiquitin chains. Signal the protein for selective degradation. This Arabidopsis thaliana (Mouse-ear cress) protein is Ubiquitin-conjugating enzyme E2 14 (UBC14).